The following is a 566-amino-acid chain: Arginine--tRNA ligase (566 aa).

A 'HIGH' region motif is present at residues 123-133; that stretch reads PNIAKPFHIGH.

Belongs to the class-I aminoacyl-tRNA synthetase family. As to quaternary structure, monomer.

Its subcellular location is the cytoplasm. The enzyme catalyses tRNA(Arg) + L-arginine + ATP = L-arginyl-tRNA(Arg) + AMP + diphosphate. The protein is Arginine--tRNA ligase of Halothermothrix orenii (strain H 168 / OCM 544 / DSM 9562).